A 101-amino-acid chain; its full sequence is uncharacterized protein (101 aa).

This is an uncharacterized protein from Shigella flexneri.